Consider the following 223-residue polypeptide: HTH-type transcriptional dual regulator CecR (223 aa).

Positions 11-70 (EQAKKQLIAAALAQFGEYGMNATTREIAAQAGQNIAAITYYFGSKEDLYLACAQWIADFI) constitute an HTH tetR-type domain. The H-T-H motif DNA-binding region spans 33-52 (TTREIAAQAGQNIAAITYYF).

It localises to the cytoplasm. Functionally, regulates transcription of the cecR-ybhGFSR operon and the rhlE gene, which altogether are involved in the control of sensitivity to cefoperazone and chloramphenicol. Represses the cecR-ybhGFSR operon and activates the rhlE operon. Acts by binding to a palindromic sequence within the intergenic spacer located between these two divergently transcribed operons. The polypeptide is HTH-type transcriptional dual regulator CecR (Shigella flexneri).